The sequence spans 138 residues: Basic phospholipase A2 Tbo-G6D49 (138 aa).

The signal sequence occupies residues 1–16 (MRTLWIMAVLLVGVEG). Cystine bridges form between C42–C131, C44–C60, C59–C111, C65–C138, C66–C104, C73–C97, and C91–C102. Ca(2+) contacts are provided by Y43, G45, and G47. H63 is an active-site residue. Residue D64 participates in Ca(2+) binding. D105 is an active-site residue.

As to quaternary structure, monomer. Ca(2+) serves as cofactor. Expressed by the venom gland.

Its subcellular location is the secreted. It carries out the reaction a 1,2-diacyl-sn-glycero-3-phosphocholine + H2O = a 1-acyl-sn-glycero-3-phosphocholine + a fatty acid + H(+). Functionally, snake venom phospholipase A2 (PLA2) that impairs hemostasis. It weakly inhibits ADP-induced platelet aggregation when tested on platelet rich plasma from human and rabbit blood (15-25% of inhibition at 5-10 ug of enzyme), and dose-dependently inhibits blood coagulation, possibly by inhibiting thrombin activation. Exhibits strong hydrolytic activities toward L-dipalmitoyl phosphatidylcholine. PLA2 catalyzes the calcium-dependent hydrolysis of the 2-acyl groups in 3-sn-phosphoglycerides. The sequence is that of Basic phospholipase A2 Tbo-G6D49 from Craspedocephalus borneensis (Borneo pit viper).